Consider the following 336-residue polypeptide: Dihydroorotate dehydrogenase (quinone) (336 aa).

FMN-binding positions include 62–66 (AGLDK) and Thr-86. Residue Lys-66 participates in substrate binding. 111 to 115 (NRMGF) is a substrate binding site. 2 residues coordinate FMN: Asn-139 and Asn-172. Asn-172 serves as a coordination point for substrate. Ser-175 acts as the Nucleophile in catalysis. Asn-177 is a binding site for substrate. Positions 217 and 245 each coordinate FMN. Residue 246 to 247 (NT) coordinates substrate. FMN is bound by residues Gly-268, Gly-297, and 318–319 (YT).

Belongs to the dihydroorotate dehydrogenase family. Type 2 subfamily. As to quaternary structure, monomer. FMN is required as a cofactor.

Its subcellular location is the cell membrane. It catalyses the reaction (S)-dihydroorotate + a quinone = orotate + a quinol. It participates in pyrimidine metabolism; UMP biosynthesis via de novo pathway; orotate from (S)-dihydroorotate (quinone route): step 1/1. Catalyzes the conversion of dihydroorotate to orotate with quinone as electron acceptor. In Vibrio parahaemolyticus serotype O3:K6 (strain RIMD 2210633), this protein is Dihydroorotate dehydrogenase (quinone).